The primary structure comprises 93 residues: Small ribosomal subunit protein uS19 (93 aa).

Belongs to the universal ribosomal protein uS19 family.

Its function is as follows. Protein S19 forms a complex with S13 that binds strongly to the 16S ribosomal RNA. This Mycolicibacterium paratuberculosis (strain ATCC BAA-968 / K-10) (Mycobacterium paratuberculosis) protein is Small ribosomal subunit protein uS19.